The following is a 189-amino-acid chain: Interferon alpha-1 (189 aa).

An N-terminal signal peptide occupies residues 1-23 (MARLCAFLMVLAVLSYWPTCSLG). Disulfide bonds link C24–C122 and C52–C162. Residue N101 is glycosylated (N-linked (GlcNAc...) asparagine).

Belongs to the alpha/beta interferon family. Interacts with CR2. In terms of processing, glycosylated.

It is found in the secreted. Produced by macrophages, IFN-alpha have antiviral activities. Interferon stimulates the production of two enzymes: a protein kinase and an oligoadenylate synthetase. The chain is Interferon alpha-1 (Ifna1) from Mus musculus (Mouse).